The following is a 122-amino-acid chain: Large ribosomal subunit protein uL14 (122 aa).

Belongs to the universal ribosomal protein uL14 family. Part of the 50S ribosomal subunit. Forms a cluster with proteins L3 and L19. In the 70S ribosome, L14 and L19 interact and together make contacts with the 16S rRNA in bridges B5 and B8.

Binds to 23S rRNA. Forms part of two intersubunit bridges in the 70S ribosome. The sequence is that of Large ribosomal subunit protein uL14 from Brucella abortus (strain 2308).